Reading from the N-terminus, the 354-residue chain is Chorismate synthase (354 aa).

An NADP(+)-binding site is contributed by Arg48. FMN contacts are provided by residues 125-127 (RAS), Gly277, 292-296 (KPIPS), and Arg318.

This sequence belongs to the chorismate synthase family. Homotetramer. Requires FMNH2 as cofactor.

It carries out the reaction 5-O-(1-carboxyvinyl)-3-phosphoshikimate = chorismate + phosphate. Its pathway is metabolic intermediate biosynthesis; chorismate biosynthesis; chorismate from D-erythrose 4-phosphate and phosphoenolpyruvate: step 7/7. In terms of biological role, catalyzes the anti-1,4-elimination of the C-3 phosphate and the C-6 proR hydrogen from 5-enolpyruvylshikimate-3-phosphate (EPSP) to yield chorismate, which is the branch point compound that serves as the starting substrate for the three terminal pathways of aromatic amino acid biosynthesis. This reaction introduces a second double bond into the aromatic ring system. This is Chorismate synthase from Nitratidesulfovibrio vulgaris (strain DP4) (Desulfovibrio vulgaris).